We begin with the raw amino-acid sequence, 510 residues long: 2,3-bisphosphoglycerate-independent phosphoglycerate mutase (510 aa).

Mn(2+)-binding residues include Asp-11 and Ser-61. The Phosphoserine intermediate role is filled by Ser-61. Residues His-124, 154 to 155 (RD), Arg-185, Arg-191, 260 to 263 (RPDR), and Lys-333 contribute to the substrate site. Residues Asp-398, His-402, Asp-439, His-440, and His-457 each coordinate Mn(2+).

Belongs to the BPG-independent phosphoglycerate mutase family. Monomer. It depends on Mn(2+) as a cofactor.

It catalyses the reaction (2R)-2-phosphoglycerate = (2R)-3-phosphoglycerate. The protein operates within carbohydrate degradation; glycolysis; pyruvate from D-glyceraldehyde 3-phosphate: step 3/5. Functionally, catalyzes the interconversion of 2-phosphoglycerate and 3-phosphoglycerate. The protein is 2,3-bisphosphoglycerate-independent phosphoglycerate mutase of Mycoplasma mobile (strain ATCC 43663 / 163K / NCTC 11711) (Mesomycoplasma mobile).